A 1548-amino-acid polypeptide reads, in one-letter code: Dicer-like protein 1 (1548 aa).

The segment covering 1 to 41 (MGDPAAHEMADLERGFSSEDDAEYRSGDDEASKFVENEPSK) has biased composition (basic and acidic residues). The tract at residues 1 to 48 (MGDPAAHEMADLERGFSSEDDAEYRSGDDEASKFVENEPSKRGKISQK) is disordered. One can recognise a Helicase ATP-binding domain in the interval 106-289 (LFERAKQQNT…QAAIELEGLL (184 aa)). 119 to 126 (LDTGSGKT) provides a ligand contact to ATP. The DEAH box signature appears at 232-235 (DEAH). Residues 428-589 (TLSKLLEEYF…FCNTQPEDRL (162 aa)) form the Helicase C-terminal domain. The 95-residue stretch at 624 to 718 (SLPILQAFLN…RSKFVEKRHV (95 aa)) folds into the Dicer dsRNA-binding fold domain. Residues 871–1006 (PLLRHVADRD…FVLEPMRISP (136 aa)) enclose the PAZ domain. RNase III domains are found at residues 1051–1197 (LTKD…MTTR) and 1248–1411 (AQKI…VDSK). Mg(2+) is bound by residues Glu-1288, Asp-1397, and Glu-1400. The 74-residue stretch at 1445–1518 (TFFTQYVFET…ARKALDKLRS (74 aa)) folds into the DRBM domain. Zn(2+) contacts are provided by Cys-1457, His-1489, Cys-1530, and Cys-1532.

This sequence belongs to the helicase family. Dicer subfamily. Requires Mg(2+) as cofactor. Mn(2+) serves as cofactor.

Dicer-like endonuclease involved in cleaving double-stranded RNA in the RNA interference (RNAi) pathway. Produces 21 to 25 bp dsRNAs (siRNAs) which target the selective destruction of homologous RNAs leading to sequence-specific suppression of gene expression, called post-transcriptional gene silencing (PTGS). Part of a broad host defense response against viral infection and transposons. The polypeptide is Dicer-like protein 1 (DCL-1) (Cryphonectria parasitica (Chestnut blight fungus)).